A 343-amino-acid polypeptide reads, in one-letter code: 4-hydroxyproline 2-epimerase 1 (343 aa).

The Proton acceptor role is filled by serine 90. Substrate-binding positions include 91–92 (GS), aspartate 251, and 256–257 (GT).

The protein belongs to the proline racemase family.

The enzyme catalyses trans-4-hydroxy-L-proline = cis-4-hydroxy-D-proline. Catalyzes the epimerization of trans-4-hydroxy-L-proline (t4LHyp) to cis-4-hydroxy-D-proline (c4DHyp) in vitro, albeit with low efficiency. The physiological substrate may be different. Displays no proline racemase activity. The protein is 4-hydroxyproline 2-epimerase 1 of Brucella anthropi (strain ATCC 49188 / DSM 6882 / CCUG 24695 / JCM 21032 / LMG 3331 / NBRC 15819 / NCTC 12168 / Alc 37) (Ochrobactrum anthropi).